We begin with the raw amino-acid sequence, 161 residues long: 2-C-methyl-D-erythritol 2,4-cyclodiphosphate synthase (161 aa).

The a divalent metal cation site is built by Asp10 and His12. Residues 10-12 (DVH) and 36-37 (HS) contribute to the 4-CDP-2-C-methyl-D-erythritol 2-phosphate site. Residue His44 coordinates a divalent metal cation. Residues 58-60 (DIG), 63-67 (FPDTD), 102-108 (AQAPKML), 134-137 (TTTE), Phe141, and Arg144 each bind 4-CDP-2-C-methyl-D-erythritol 2-phosphate.

This sequence belongs to the IspF family. Homotrimer. A divalent metal cation serves as cofactor.

It catalyses the reaction 4-CDP-2-C-methyl-D-erythritol 2-phosphate = 2-C-methyl-D-erythritol 2,4-cyclic diphosphate + CMP. It functions in the pathway isoprenoid biosynthesis; isopentenyl diphosphate biosynthesis via DXP pathway; isopentenyl diphosphate from 1-deoxy-D-xylulose 5-phosphate: step 4/6. In terms of biological role, involved in the biosynthesis of isopentenyl diphosphate (IPP) and dimethylallyl diphosphate (DMAPP), two major building blocks of isoprenoid compounds. Catalyzes the conversion of 4-diphosphocytidyl-2-C-methyl-D-erythritol 2-phosphate (CDP-ME2P) to 2-C-methyl-D-erythritol 2,4-cyclodiphosphate (ME-CPP) with a corresponding release of cytidine 5-monophosphate (CMP). The polypeptide is 2-C-methyl-D-erythritol 2,4-cyclodiphosphate synthase (Shewanella loihica (strain ATCC BAA-1088 / PV-4)).